Reading from the N-terminus, the 348-residue chain is WW domain binding protein 1-like (348 aa).

A helical transmembrane segment spans residues 42–62 (LWWFWLVWTVVIILSCCCVCH). Disordered stretches follow at residues 111 to 253 (VVNR…RRFT) and 306 to 348 (CLSS…GSPS). Over residues 134-155 (LPPPPQGGPPGGSPPGADPPPQ) the composition is skewed to pro residues. Low complexity predominate over residues 156–177 (GSQGAQSSPLSGPSRSSTRPPS). A Phosphoserine modification is found at serine 177. Positions 220–234 (SECKEELLKDSRSER) are enriched in basic and acidic residues. The span at 331 to 348 (NTINEQDSPNSQHSGSPS) shows a compositional bias: polar residues.

It is found in the membrane. In Mus musculus (Mouse), this protein is WW domain binding protein 1-like (Wbp1l).